The sequence spans 407 residues: Digeranylgeranylglycerophospholipid reductase (407 aa).

FAD contacts are provided by Ala-15, Glu-34, Cys-45, Ala-46, Gly-48, Arg-99, Ala-123, Asp-281, Gly-293, and Ile-294.

It belongs to the geranylgeranyl reductase family. DGGGPL reductase subfamily. The cofactor is FAD.

It catalyses the reaction a 2,3-bis-O-phytanyl-sn-glycerol 1-phospholipid + 8 oxidized 2[4Fe-4S]-[ferredoxin] = a 2,3-bis-O-(geranylgeranyl)-sn-glycerol 1-phospholipid + 8 reduced 2[4Fe-4S]-[ferredoxin] + 16 H(+). The enzyme catalyses 2,3-bis-O-(phytanyl)-sn-glycerol 1-phosphate + 8 oxidized 2[4Fe-4S]-[ferredoxin] = 2,3-bis-O-(geranylgeranyl)-sn-glycerol 1-phosphate + 8 reduced 2[4Fe-4S]-[ferredoxin] + 16 H(+). It carries out the reaction a 2,3-bis-O-phytanyl-sn-glycerol 1-phospholipid + 8 A = a 2,3-bis-O-(geranylgeranyl)-sn-glycerol 1-phospholipid + 8 AH2. The catalysed reaction is CDP-2,3-bis-O-(geranylgeranyl)-sn-glycerol + 8 AH2 = CDP-2,3-bis-O-(phytanyl)-sn-glycerol + 8 A. It catalyses the reaction archaetidylserine + 8 AH2 = 2,3-bis-O-phytanyl-sn-glycero-3-phospho-L-serine + 8 A. The protein operates within membrane lipid metabolism; glycerophospholipid metabolism. Functionally, is involved in the reduction of 2,3-digeranylgeranylglycerophospholipids (unsaturated archaeols) into 2,3-diphytanylglycerophospholipids (saturated archaeols) in the biosynthesis of archaeal membrane lipids. Catalyzes the formation of archaetidic acid (2,3-di-O-phytanyl-sn-glyceryl phosphate) from 2,3-di-O-geranylgeranylglyceryl phosphate (DGGGP) via the hydrogenation of each double bond of the isoprenoid chains. Requires the adjacently encoded ferredoxin MA_1485 as the electron donor. Is also probably able to reduce double bonds of geranyl groups in CDP-2,3-bis-O-(geranylgeranyl)-sn-glycerol and archaetidylserine, thus acting at various stages in the biosynthesis of archaeal membrane lipids. The polypeptide is Digeranylgeranylglycerophospholipid reductase (Methanosarcina acetivorans (strain ATCC 35395 / DSM 2834 / JCM 12185 / C2A)).